The sequence spans 465 residues: FAD-dependent monooxygenase pyr5 (465 aa).

The signal sequence occupies residues 1 to 16; it reads MRVLIIGGSIAGLTLA. Residues glutamate 30, glycine 44, and arginine 103 each contribute to the FAD site. Tyrosine 210 is an active-site residue. Aspartate 306 and alanine 319 together coordinate FAD. The chain crosses the membrane as a helical span at residues 440–456; that stretch reads PTFPLTVAGLCLVAIVI.

It belongs to the paxM FAD-dependent monooxygenase family. It depends on FAD as a cofactor.

The protein localises to the membrane. The catalysed reaction is 4-hydroxy-3-[(2E,6E)-farnesyl]-6-(pyridin-3-yl)-2H-pyran-2-one + NADPH + O2 + H(+) = 2-oxo-3-[(8S)-epoxy-(2E,6E)-farnesyl]-6-(pyridin-3-yl)-2H-pyran-4-olate + NADP(+) + H2O. The protein operates within secondary metabolite biosynthesis; terpenoid biosynthesis. Its function is as follows. FAD-dependent monooxygenase; part of the gene cluster that mediates the biosynthesis of pyripyropene A, a specific human acyl-coenzyme A:cholesterol acyltransferase 2 inhibitor. The first step of the pathway is the synthesis of nicotinyl-CoA from nicotinic acid by the nicotinic acid-CoA ligase pyr1. Nicotinyl-CoA is then a substrate of polyketide synthase pyr2 to produce 4-hydroxy-6-(3-pyridinyl)-2H-pyran-2-one (HPPO) which is further prenylated by the polyprenyl transferase pyr6 to yield farnesyl-HPPO. The next steps consist of an epoxidation of farnesyl-HPPO to epoxyfarnesyl-HPPO by FAD-dependent monooxygenase pyr5 and a cyclization of the terpenoid portion by the terpene cyclase pyr4 to yield deacetyl-pyripyropene E. The 2 cytochrome P450 monooxygenases pyr3 and pyr9, and the 2 acetyltransferases pyr7 and pyr8 are involved in the conversion of deacetyl-pyripyropene E into pyripyropene A through several cycles of oxidation and acetylation steps. Pyr7 acetylates deacetyl-pyripyropene E to pyripyropene E which is oxidized to 11-deacetyl-pyripyropene O by pyr3, which is in turn acetylated into pyripyropene O by pyr8. Pyripyropene O is then oxidized to deacetyl-pyripyropene A by pyr9. Deacetyl-pyripyropene A is finally acetylated to pyripyropene A by pyr8. The chain is FAD-dependent monooxygenase pyr5 from Aspergillus fumigatus (strain ATCC MYA-4609 / CBS 101355 / FGSC A1100 / Af293) (Neosartorya fumigata).